A 2289-amino-acid polypeptide reads, in one-letter code: DNA polymerase II large subunit (2289 aa).

2 disordered regions span residues 279–330 (IGSD…SPRA) and 544–563 (SDTN…NTDD). A compositionally biased stretch (basic and acidic residues) spans 292-304 (GEADIVKTDKDTN). Residues 305-318 (ESETEDGIDNDDYN) are compositionally biased toward acidic residues. Residues 544 to 557 (SDTNSASGNTSLRA) are compositionally biased toward polar residues. DOD-type homing endonuclease domains lie at 1222 to 1367 (LLGY…RLGI) and 1755 to 1911 (LLGQ…RLGV).

It belongs to the archaeal DNA polymerase II family. As to quaternary structure, heterodimer of a large subunit and a small subunit. In terms of processing, this protein undergoes a protein self splicing that involves a post-translational excision of the intervening region (intein) followed by peptide ligation.

The enzyme catalyses DNA(n) + a 2'-deoxyribonucleoside 5'-triphosphate = DNA(n+1) + diphosphate. The catalysed reaction is Exonucleolytic cleavage in the 3'- to 5'-direction to yield nucleoside 5'-phosphates.. Functionally, possesses two activities: a DNA synthesis (polymerase) and an exonucleolytic activity that degrades single-stranded DNA in the 3'- to 5'-direction. Has a template-primer preference which is characteristic of a replicative DNA polymerase. This is DNA polymerase II large subunit from Haloquadratum walsbyi (strain DSM 16790 / HBSQ001).